The sequence spans 63 residues: Small ribosomal subunit protein eS17 (63 aa).

The protein belongs to the eukaryotic ribosomal protein eS17 family.

This chain is Small ribosomal subunit protein eS17, found in Methanosphaerula palustris (strain ATCC BAA-1556 / DSM 19958 / E1-9c).